The primary structure comprises 30 residues: uncharacterized protein (30 aa).

The interval 1-30 (MHLSTLPNVPWPNRSFTTKRPPLPNMSFSW) is disordered.

This is an uncharacterized protein from Saccharomyces cerevisiae (strain ATCC 204508 / S288c) (Baker's yeast).